A 475-amino-acid polypeptide reads, in one-letter code: Ribulose bisphosphate carboxylase large chain (475 aa).

A propeptide spanning residues 1–2 is cleaved from the precursor; sequence MS. Residue Pro3 is modified to N-acetylproline. Residue Lys14 is modified to N6,N6,N6-trimethyllysine. 2 residues coordinate substrate: Asn123 and Thr173. Lys175 (proton acceptor) is an active-site residue. Residue Lys177 participates in substrate binding. The Mg(2+) site is built by Lys201, Asp203, and Glu204. Lys201 carries the post-translational modification N6-carboxylysine. The Proton acceptor role is filled by His294. The substrate site is built by Arg295, His327, and Ser379.

Belongs to the RuBisCO large chain family. Type I subfamily. In terms of assembly, heterohexadecamer of 8 large chains and 8 small chains; disulfide-linked. The disulfide link is formed within the large subunit homodimers. The cofactor is Mg(2+). The disulfide bond which can form in the large chain dimeric partners within the hexadecamer appears to be associated with oxidative stress and protein turnover.

It localises to the plastid. The protein resides in the chloroplast. It carries out the reaction 2 (2R)-3-phosphoglycerate + 2 H(+) = D-ribulose 1,5-bisphosphate + CO2 + H2O. The enzyme catalyses D-ribulose 1,5-bisphosphate + O2 = 2-phosphoglycolate + (2R)-3-phosphoglycerate + 2 H(+). In terms of biological role, ruBisCO catalyzes two reactions: the carboxylation of D-ribulose 1,5-bisphosphate, the primary event in carbon dioxide fixation, as well as the oxidative fragmentation of the pentose substrate in the photorespiration process. Both reactions occur simultaneously and in competition at the same active site. This is Ribulose bisphosphate carboxylase large chain from Castanea sativa (Sweet chestnut).